A 152-amino-acid chain; its full sequence is Xanthine-guanine phosphoribosyltransferase (152 aa).

5-phospho-alpha-D-ribose 1-diphosphate-binding positions include 37–38 (RG) and 88–96 (DDLVDTGNT). Asp-89 lines the Mg(2+) pocket. The guanine site is built by Asp-92 and Ile-135. Xanthine-binding residues include Asp-92 and Ile-135. GMP contacts are provided by residues 92–96 (DTGNT) and 134–135 (WI).

Belongs to the purine/pyrimidine phosphoribosyltransferase family. XGPT subfamily. As to quaternary structure, homotetramer. Mg(2+) is required as a cofactor.

It is found in the cell inner membrane. The catalysed reaction is GMP + diphosphate = guanine + 5-phospho-alpha-D-ribose 1-diphosphate. The enzyme catalyses XMP + diphosphate = xanthine + 5-phospho-alpha-D-ribose 1-diphosphate. It carries out the reaction IMP + diphosphate = hypoxanthine + 5-phospho-alpha-D-ribose 1-diphosphate. The protein operates within purine metabolism; GMP biosynthesis via salvage pathway; GMP from guanine: step 1/1. It functions in the pathway purine metabolism; XMP biosynthesis via salvage pathway; XMP from xanthine: step 1/1. Functionally, purine salvage pathway enzyme that catalyzes the transfer of the ribosyl-5-phosphate group from 5-phospho-alpha-D-ribose 1-diphosphate (PRPP) to the N9 position of the 6-oxopurines guanine and xanthine to form the corresponding ribonucleotides GMP (guanosine 5'-monophosphate) and XMP (xanthosine 5'-monophosphate), with the release of PPi. To a lesser extent, also acts on hypoxanthine. The sequence is that of Xanthine-guanine phosphoribosyltransferase from Actinobacillus succinogenes (strain ATCC 55618 / DSM 22257 / CCUG 43843 / 130Z).